We begin with the raw amino-acid sequence, 89 residues long: Small ribosomal subunit protein bS20 (89 aa).

Belongs to the bacterial ribosomal protein bS20 family.

Its function is as follows. Binds directly to 16S ribosomal RNA. The protein is Small ribosomal subunit protein bS20 of Helicobacter acinonychis (strain Sheeba).